We begin with the raw amino-acid sequence, 105 residues long: Large ribosomal subunit protein uL24 (105 aa).

Positions 40–61 (RIKKHTPQSANERGASSGGIVT) are disordered.

The protein belongs to the universal ribosomal protein uL24 family. In terms of assembly, part of the 50S ribosomal subunit.

In terms of biological role, one of two assembly initiator proteins, it binds directly to the 5'-end of the 23S rRNA, where it nucleates assembly of the 50S subunit. One of the proteins that surrounds the polypeptide exit tunnel on the outside of the subunit. The protein is Large ribosomal subunit protein uL24 of Mycobacteroides abscessus (strain ATCC 19977 / DSM 44196 / CCUG 20993 / CIP 104536 / JCM 13569 / NCTC 13031 / TMC 1543 / L948) (Mycobacterium abscessus).